A 257-amino-acid chain; its full sequence is 7-carboxy-7-deazaguanine synthase (257 aa).

The interval 1 to 25 is disordered; it reads MKSVDHPVDVLPAEHSAETPGDARA. Residues 39 to 41 and arginine 54 each bind substrate; that span reads RQG. Residues 45–244 enclose the Radical SAM core domain; sequence LTGTESVFIR…AISRGYQYCD (200 aa). [4Fe-4S] cluster contacts are provided by cysteine 58, cysteine 62, and cysteine 65. Position 67 (threonine 67) interacts with Mg(2+). Threonine 99 serves as a coordination point for substrate. Residues glycine 101 and 143–145 contribute to the S-adenosyl-L-methionine site; that span reads SPK.

It belongs to the radical SAM superfamily. 7-carboxy-7-deazaguanine synthase family. Homodimer. [4Fe-4S] cluster serves as cofactor. The cofactor is S-adenosyl-L-methionine. Requires Mg(2+) as cofactor.

It catalyses the reaction 6-carboxy-5,6,7,8-tetrahydropterin + H(+) = 7-carboxy-7-deazaguanine + NH4(+). It participates in purine metabolism; 7-cyano-7-deazaguanine biosynthesis. Functionally, catalyzes the complex heterocyclic radical-mediated conversion of 6-carboxy-5,6,7,8-tetrahydropterin (CPH4) to 7-carboxy-7-deazaguanine (CDG), a step common to the biosynthetic pathways of all 7-deazapurine-containing compounds. This Rhodopirellula baltica (strain DSM 10527 / NCIMB 13988 / SH1) protein is 7-carboxy-7-deazaguanine synthase.